We begin with the raw amino-acid sequence, 561 residues long: Acylcarnitine hydrolase (561 aa).

Positions 1–26 (MTRNQLHNWLNAGFFGLLLLLIHVQG) are cleaved as a signal peptide. Cys-97 and Cys-125 are disulfide-bonded. Residue Ser-230 is the Acyl-ester intermediate of the active site. Cys-282 and Cys-293 are joined by a disulfide. Catalysis depends on charge relay system residues Glu-347 and His-459. The Prevents secretion from ER signature appears at 558–561 (HREL).

This sequence belongs to the type-B carboxylesterase/lipase family. In terms of tissue distribution, detected in liver (at protein level).

It is found in the microsome. The protein localises to the endoplasmic reticulum. The catalysed reaction is an O-acyl-(R)-carnitine + H2O = (R)-carnitine + a fatty acid + H(+). It catalyses the reaction all-trans-retinyl hexadecanoate + H2O = all-trans-retinol + hexadecanoate + H(+). Hydrolase with high activity towards palmitoylcarnitine. Is also active with p-nitrophenylacetate and alpha-naphthylacetate. May also hydrolyze retinyl esters. This is Acylcarnitine hydrolase from Mus musculus (Mouse).